We begin with the raw amino-acid sequence, 205 residues long: N-(5'-phosphoribosyl)anthranilate isomerase (205 aa).

The protein belongs to the TrpF family.

It carries out the reaction N-(5-phospho-beta-D-ribosyl)anthranilate = 1-(2-carboxyphenylamino)-1-deoxy-D-ribulose 5-phosphate. It participates in amino-acid biosynthesis; L-tryptophan biosynthesis; L-tryptophan from chorismate: step 3/5. The protein is N-(5'-phosphoribosyl)anthranilate isomerase of Clostridium acetobutylicum (strain ATCC 824 / DSM 792 / JCM 1419 / IAM 19013 / LMG 5710 / NBRC 13948 / NRRL B-527 / VKM B-1787 / 2291 / W).